The primary structure comprises 318 residues: Ribosomal RNA small subunit methyltransferase H (318 aa).

S-adenosyl-L-methionine is bound by residues 35 to 37 (GGH), aspartate 54, phenylalanine 83, aspartate 104, and glutamine 111.

The protein belongs to the methyltransferase superfamily. RsmH family.

It is found in the cytoplasm. It catalyses the reaction cytidine(1402) in 16S rRNA + S-adenosyl-L-methionine = N(4)-methylcytidine(1402) in 16S rRNA + S-adenosyl-L-homocysteine + H(+). Its function is as follows. Specifically methylates the N4 position of cytidine in position 1402 (C1402) of 16S rRNA. The polypeptide is Ribosomal RNA small subunit methyltransferase H (Latilactobacillus sakei subsp. sakei (strain 23K) (Lactobacillus sakei subsp. sakei)).